A 218-amino-acid chain; its full sequence is Cytochrome b6 (218 aa).

A helical transmembrane segment spans residues 35–55 (IFYCLGGITLVCFLVQFATGF). Cys-38 contributes to the heme c binding site. Heme b-binding residues include His-89 and His-103. 3 consecutive transmembrane segments (helical) span residues 93–113 (ASMM…TGGF), 119–139 (LTWV…VTGY), and 189–209 (LHTF…FLMI). Residues His-190 and His-205 each contribute to the heme b site.

Belongs to the cytochrome b family. PetB subfamily. The 4 large subunits of the cytochrome b6-f complex are cytochrome b6, subunit IV (17 kDa polypeptide, PetD), cytochrome f and the Rieske protein, while the 4 small subunits are PetG, PetL, PetM and PetN. The complex functions as a dimer. Heme b is required as a cofactor. Heme c serves as cofactor.

The protein localises to the cellular thylakoid membrane. In terms of biological role, component of the cytochrome b6-f complex, which mediates electron transfer between photosystem II (PSII) and photosystem I (PSI), cyclic electron flow around PSI, and state transitions. In Prochlorococcus marinus (strain MIT 9303), this protein is Cytochrome b6.